A 254-amino-acid polypeptide reads, in one-letter code: Alcohol dehydrogenase (254 aa).

10 to 33 is a binding site for NAD(+); it reads FVAGLGGIGLDTSKGIVKAGPKNL. Serine 138 is a binding site for substrate. The active-site Proton acceptor is tyrosine 151.

It belongs to the short-chain dehydrogenases/reductases (SDR) family. As to quaternary structure, homodimer.

It catalyses the reaction a primary alcohol + NAD(+) = an aldehyde + NADH + H(+). It carries out the reaction a secondary alcohol + NAD(+) = a ketone + NADH + H(+). The chain is Alcohol dehydrogenase (Adh) from Drosophila immigrans (Fruit fly).